The chain runs to 428 residues: Adenylosuccinate synthetase (428 aa).

GTP-binding positions include 12-18 and 40-42; these read GDEGKGK and GHT. Asp-13 acts as the Proton acceptor in catalysis. Residues Asp-13 and Gly-40 each coordinate Mg(2+). IMP-binding positions include 13-16, 38-41, Thr-130, Arg-144, Gln-225, Thr-240, and Arg-304; these read DEGK and NAGH. His-41 functions as the Proton donor in the catalytic mechanism. Residue 300 to 306 participates in substrate binding; it reads ATTGRPR. Residues Arg-306, 332–334, and 415–417 each bind GTP; these read KLD and SVG.

The protein belongs to the adenylosuccinate synthetase family. In terms of assembly, homodimer. The cofactor is Mg(2+).

Its subcellular location is the cytoplasm. It carries out the reaction IMP + L-aspartate + GTP = N(6)-(1,2-dicarboxyethyl)-AMP + GDP + phosphate + 2 H(+). Its pathway is purine metabolism; AMP biosynthesis via de novo pathway; AMP from IMP: step 1/2. Functionally, plays an important role in the de novo pathway of purine nucleotide biosynthesis. Catalyzes the first committed step in the biosynthesis of AMP from IMP. The protein is Adenylosuccinate synthetase of Lawsonia intracellularis (strain PHE/MN1-00).